We begin with the raw amino-acid sequence, 550 residues long: Glycosyltransferase-like protein gnt12 (550 aa).

Residues 1–29 are disordered; that stretch reads MSYLPLYNNNNNINNNNNNNNNRINNNKE. Topologically, residues 1-36 are cytoplasmic; sequence MSYLPLYNNNNNINNNNNNNNNRINNNKEKGVKNKP. Residues 8–25 are compositionally biased toward low complexity; that stretch reads NNNNNINNNNNNNNNRIN. The chain crosses the membrane as a helical; Signal-anchor for type II membrane protein span at residues 37 to 57; it reads FQIFISIVFIVFLCFFLIWSM. Residues 58–550 lie on the Extracellular side of the membrane; that stretch reads EAKKDKNIKI…LFNEPLTNEC (493 aa). Over residues 81 to 97 the composition is skewed to low complexity; it reads LINEPINNNKNNKNNIP. Residues 81–100 are disordered; that stretch reads LINEPINNNKNNKNNIPKNH. 3 N-linked (GlcNAc...) asparagine glycosylation sites follow: Asn-233, Asn-322, and Asn-426.

Belongs to the glycosyltransferase 8 family. Highly divergent.

Its subcellular location is the membrane. This is Glycosyltransferase-like protein gnt12 (gnt12) from Dictyostelium discoideum (Social amoeba).